A 487-amino-acid polypeptide reads, in one-letter code: 4-alpha-glucanotransferase (487 aa).

The protein belongs to the disproportionating enzyme family.

The protein resides in the cytoplasm. It carries out the reaction Transfers a segment of a (1-&gt;4)-alpha-D-glucan to a new position in an acceptor, which may be glucose or a (1-&gt;4)-alpha-D-glucan.. Its function is as follows. Catalyzes a disproportionation reaction in which single or multiple glucose units from oligosaccharides are transferred to the 4-hydroxyl group of acceptor sugars. Glucose, maltose and maltotriose can act as acceptor, whereas of the three only maltotriose can act as donor. This Clostridium butyricum protein is 4-alpha-glucanotransferase (malQ).